A 392-amino-acid polypeptide reads, in one-letter code: 8-amino-7-oxononanoate synthase (392 aa).

Arg21 provides a ligand contact to substrate. A pyridoxal 5'-phosphate-binding site is contributed by 114–115; it reads GY. His139 contributes to the substrate binding site. Residues Ser187, 212-215, and 243-246 contribute to the pyridoxal 5'-phosphate site; these read DEAH and TFGK. Lys246 carries the post-translational modification N6-(pyridoxal phosphate)lysine. Thr359 provides a ligand contact to substrate.

It belongs to the class-II pyridoxal-phosphate-dependent aminotransferase family. BioF subfamily. In terms of assembly, homodimer. It depends on pyridoxal 5'-phosphate as a cofactor.

It catalyses the reaction 6-carboxyhexanoyl-[ACP] + L-alanine + H(+) = (8S)-8-amino-7-oxononanoate + holo-[ACP] + CO2. The protein operates within cofactor biosynthesis; biotin biosynthesis. Catalyzes the decarboxylative condensation of pimeloyl-[acyl-carrier protein] and L-alanine to produce 8-amino-7-oxononanoate (AON), [acyl-carrier protein], and carbon dioxide. This Chlorobaculum parvum (strain DSM 263 / NCIMB 8327) (Chlorobium vibrioforme subsp. thiosulfatophilum) protein is 8-amino-7-oxononanoate synthase.